The chain runs to 150 residues: Large ribosomal subunit protein uL13 (150 aa).

It belongs to the universal ribosomal protein uL13 family. In terms of assembly, part of the 50S ribosomal subunit.

Functionally, this protein is one of the early assembly proteins of the 50S ribosomal subunit, although it is not seen to bind rRNA by itself. It is important during the early stages of 50S assembly. The polypeptide is Large ribosomal subunit protein uL13 (Mesoplasma florum (strain ATCC 33453 / NBRC 100688 / NCTC 11704 / L1) (Acholeplasma florum)).